The following is a 411-amino-acid chain: Pyruvate dehydrogenase E1 component subunit alpha, mitochondrial (411 aa).

The transit peptide at 1–29 directs the protein to the mitochondrion; the sequence is MFSRAVRLSRAALPIRVASQRVPIAARRS. Positions 111, 137, 138, 184, 186, 215, 216, 217, 244, and 246 each coordinate pyruvate. Thiamine diphosphate is bound by residues tyrosine 137, arginine 138, glycine 184, valine 186, aspartate 215, glycine 216, alanine 217, and asparagine 244. Position 215 (aspartate 215) interacts with Mg(2+). Residues asparagine 244 and tyrosine 246 each coordinate Mg(2+). Residue histidine 311 coordinates thiamine diphosphate.

In terms of assembly, eukaryotic pyruvate dehydrogenase (PDH) complexes are organized as a core consisting of the oligomeric dihydrolipoamide acetyl-transferase (E2), around which are arranged multiple copies of pyruvate dehydrogenase (E1), dihydrolipoamide dehydrogenase (E3) and protein X (E3BP) bound by non-covalent bonds. The Chaetomium thermophilum PDH complex contains 60 E2 units, 12 E3BP units, about 20 E1 units, and 12 or more E3 units. The units are organized in 1 E2 60-mer, 4 E3BP trimers, about 20 E1 tetramers, and a maximum of 12 E3 dimers. Pyruvate dehydrogenase (E1) is active as a tetramer of 2 alpha and 2 beta subunits. The E3BP trimers are bound inside the icosahedral core with tetrahedral symmetry. Thiamine diphosphate is required as a cofactor. Requires Mg(2+) as cofactor.

Its subcellular location is the mitochondrion. The catalysed reaction is N(6)-[(R)-lipoyl]-L-lysyl-[protein] + pyruvate + H(+) = N(6)-[(R)-S(8)-acetyldihydrolipoyl]-L-lysyl-[protein] + CO2. The 10-megadalton pyruvate dehydrogenase complex contains multiple copies of three enzymatic components: pyruvate dehydrogenase (E1), dihydrolipoamide acetyltransferase (E2) and lipoamide dehydrogenase (E3) and catalyzes the overall oxidative decarboxylation of pyruvate to form acetyl-CoA and CO(2). Within the complex, pyruvate and thiamine pyrophosphate (TPP or vitamin B1) are bound by pyruvate dehydrogenase E1 subunits alpha and beta and pyruvate is decarboxylated leading to the 2-carbon hydrohyethyl bound to TPP. The E2 component contains covalently-bound lipoyl cofactors and transfers the hydroxyethyl group from TPP to an oxidized form of covalently bound lipoamide, and the resulting acetyl group is then transferred to free coenzyme A to form acetyl-CoA and reduced dihydrolipoamide-E2. Finally, the flavoprotein dihydrolipoamide dehydrogenase (E3) re-oxidizes the lipoyl group of dihydrolipoamide-E2 to form lipoamide-E2 and NADH. A fourth subunit, E3BP, is responsible for tethering E3 in proximity to the core, forming the entire metabolon. This is Pyruvate dehydrogenase E1 component subunit alpha, mitochondrial from Chaetomium thermophilum (strain DSM 1495 / CBS 144.50 / IMI 039719) (Thermochaetoides thermophila).